We begin with the raw amino-acid sequence, 357 residues long: Membrane-bound lytic murein transglycosylase C (357 aa).

The first 15 residues, M1–A15, serve as a signal peptide directing secretion. C16 is lipidated: N-palmitoyl cysteine. Residue C16 is the site of S-diacylglycerol cysteine attachment.

The protein belongs to the transglycosylase Slt family.

It is found in the cell outer membrane. The enzyme catalyses Exolytic cleavage of the (1-&gt;4)-beta-glycosidic linkage between N-acetylmuramic acid (MurNAc) and N-acetylglucosamine (GlcNAc) residues in peptidoglycan, from either the reducing or the non-reducing ends of the peptidoglycan chains, with concomitant formation of a 1,6-anhydrobond in the MurNAc residue.. Functionally, murein-degrading enzyme. May play a role in recycling of muropeptides during cell elongation and/or cell division. This chain is Membrane-bound lytic murein transglycosylase C, found in Haemophilus influenzae (strain PittGG).